The sequence spans 389 residues: Phospho-N-acetylmuramoyl-pentapeptide-transferase (389 aa).

Helical transmembrane passes span 25–45, 73–93, 97–117, 135–155, 190–210, 222–242, 258–278, 286–306, 311–331, and 366–386; these read RAVM…PWVI, TMGG…WGDL, FIWI…VDDY, FWQS…VSEA, ISYP…IVGA, GLVI…AYVM, GAGE…AFLW, VFMG…VAVI, IVLF…MLQV, and QVVV…LSTL.

Belongs to the glycosyltransferase 4 family. MraY subfamily. It depends on Mg(2+) as a cofactor.

Its subcellular location is the cell inner membrane. It carries out the reaction UDP-N-acetyl-alpha-D-muramoyl-L-alanyl-gamma-D-glutamyl-meso-2,6-diaminopimeloyl-D-alanyl-D-alanine + di-trans,octa-cis-undecaprenyl phosphate = di-trans,octa-cis-undecaprenyl diphospho-N-acetyl-alpha-D-muramoyl-L-alanyl-D-glutamyl-meso-2,6-diaminopimeloyl-D-alanyl-D-alanine + UMP. It participates in cell wall biogenesis; peptidoglycan biosynthesis. In terms of biological role, catalyzes the initial step of the lipid cycle reactions in the biosynthesis of the cell wall peptidoglycan: transfers peptidoglycan precursor phospho-MurNAc-pentapeptide from UDP-MurNAc-pentapeptide onto the lipid carrier undecaprenyl phosphate, yielding undecaprenyl-pyrophosphoryl-MurNAc-pentapeptide, known as lipid I. The sequence is that of Phospho-N-acetylmuramoyl-pentapeptide-transferase from Burkholderia pseudomallei (strain 1106a).